The primary structure comprises 677 residues: MTMSRADQILQHLLRELIHNDSLVASEWLKHSKKIIQNVPSSTLVFHEMIEHIKGICDKMGIQGREDLEMPLRNACEVLNRQTVSVKQSILHAQILKLFLELSKPPSDIHVPQIPVYKDCNKNEQEAIIQLLTSCEGDHWLMPDWSSMPDDETITEDSEEETFNGNANEITIPANIHIPIIEESDNASNNKLCTLFKKSKQPNLDFLQIKPFMFWDSSLNETVRISERSIIRDSIYMLIGYPSFFFLKNGSKIETRLSLLPKLHHMSEEILRSIMTELADYGSNLEFFRQKLTSPSDSFFKSDDQSTKNEPFLSVVFIYPQIKPHLLSCLKNTHQELIKLETEVYNATKNCTLFQFFQHVKKFVDPLLCFRFAYEKSATNMWDFVKTLEFIYSTRNYSSQMFKLYKASAIAMLLWMVNQASQITSSMTIARPLYNILILCKDFPNNFLEKDNIALQLGSIVFDQSPTLNNLLVEMEILIRSKILKLGKSLDLSFDFQSLMGEFENLIKQQEEAKKSLWSKRFSRFYYGHYVFVNTCHNFFLTLYQSFTEVDENSIFNGVFETLNNDVDDESVIGEKEKLILKQKQKCLSEFFVDDIKKLLNEELLNCQKQELPDVMENTYQISTVSGIKNDPLFTLDQTCNIIAKLADNLIHPSVPIGSSAYRCRRNLADLLFLIMP.

In terms of assembly, component of the gamma-tubulin complex composed of at least alp4, alp6, alp16, ghf1, gtb1 and mod21.

It is found in the cytoplasm. It localises to the cytoskeleton. The protein resides in the microtubule organizing center. Its subcellular location is the spindle pole body. In terms of biological role, component of the gamma-tubulin complex that is required for the regulation of both interphase microtubule organization and nucleation, and mitotic bipolar spindles. Required for correct septation. This is Gamma-tubulin complex subunit mod21 from Schizosaccharomyces pombe (strain 972 / ATCC 24843) (Fission yeast).